The following is a 499-amino-acid chain: MELKTKSGDPARQRTACVVVGVYERRRMSEAARAVDAASDGYLSHLLRRGDLEGEAGQTLLLPDCPGVRTDRVLLVGCGRERDFNERTYRKAVTAAARALEQAGTGEAILFLPELPVRGRDVAWRVAATAEILETTLYRFDTYKSDPRPPRRPLRQATLAVPRRADLRRAQPALTLGQAAGRGANFSRDLGNTPANICTPGYLGEQAEALAQRFDGVRAEILGPAELEEQGLAALLAVARGAEAPPRLVVLHYRGADDDQAPVALVGKGITFDSGGISIKPSASMDEMKYDMSGAAAVFGAVHAAAEAQLPLNLVAVIPATENMPDGRATRPGDIIDSLDGQRIEVLNTDAEGRLVLADGLAYARRLEPSEVVDVATLTGAAIIGLGHHRHAVMGNAPGLVRDLLQAGERAADRGWELPLDEEYDEQLRSPFADVANIGGQPAGTITAGCFLQRFARGLRWAHLDIAGTAWKSGEHKGATGRPVPLLTHFLAGRAGWTL.

Lysine 268 and aspartate 273 together coordinate Mn(2+). The active site involves lysine 280. Mn(2+) contacts are provided by aspartate 291, aspartate 350, and glutamate 352. Arginine 354 is an active-site residue.

Belongs to the peptidase M17 family. The cofactor is Mn(2+).

It is found in the cytoplasm. The catalysed reaction is Release of an N-terminal amino acid, Xaa-|-Yaa-, in which Xaa is preferably Leu, but may be other amino acids including Pro although not Arg or Lys, and Yaa may be Pro. Amino acid amides and methyl esters are also readily hydrolyzed, but rates on arylamides are exceedingly low.. It catalyses the reaction Release of an N-terminal amino acid, preferentially leucine, but not glutamic or aspartic acids.. Its function is as follows. Presumably involved in the processing and regular turnover of intracellular proteins. Catalyzes the removal of unsubstituted N-terminal amino acids from various peptides. This Halorhodospira halophila (strain DSM 244 / SL1) (Ectothiorhodospira halophila (strain DSM 244 / SL1)) protein is Probable cytosol aminopeptidase.